Reading from the N-terminus, the 558-residue chain is Factor VII-activating protease (558 aa).

The N-terminal stretch at 1–23 is a signal peptide; the sequence is MSVVMLVFRVLLLIALVGNSAIG. EGF-like domains are found at residues 71–107, 109–146, and 148–186; these read DDDP…SRCQ, VQNK…PDCS, and VLPV…RFCE. 18 disulfides stabilise this stretch: Cys75/Cys86, Cys80/Cys95, Cys97/Cys106, Cys113/Cys123, Cys118/Cys134, Cys136/Cys145, Cys152/Cys163, Cys157/Cys174, Cys176/Cys185, Cys192/Cys274, Cys213/Cys255, Cys244/Cys269, Cys299/Cys433, Cys345/Cys361, Cys353/Cys422, Cys445/Cys513, Cys475/Cys491, and Cys503/Cys531. A Kringle domain is found at 191–274; that stretch reads DCYVGDGYSY…KWEYCNVEVC (84 aa). Positions 312–553 constitute a Peptidase S1 domain; it reads IYGGFKSTAG…FLNWIKTTMH (242 aa). Catalysis depends on charge relay system residues His360 and Asp409. Residue Ser507 is the Charge relay system of the active site.

It belongs to the peptidase S1 family. As to quaternary structure, heterodimer; disulfide-linked. Heterodimer of a 50 kDa heavy and a 27 kDa light chain linked by a disulfide bond. Post-translationally, proteolytic cleavage at Gly-23 or Met-27 can give rise to the 50 kDa heavy chain (HC) and cleavage at Arg-311 or Lys-317 can give rise to the 27 kDa light chain (LC). The HC can undergo further proteolytic cleavage giving rise to a 26 kDa fragment. The LC can undergo further proteolytic cleavage at Arg-311 leading to a 17-kDa fragment and at Arg-478 leading to a 8-kDa fragment.

It localises to the secreted. Its function is as follows. Cleaves the alpha-chain at multiple sites and the beta-chain between 'Lys-53' and 'Lys-54' but not the gamma-chain of fibrinogen and therefore does not initiate the formation of the fibrin clot and does not cause the fibrinolysis directly. It does not cleave (activate) prothrombin and plasminogen but converts the inactive single chain urinary plasminogen activator (pro-urokinase) to the active two chain form. Activates coagulation factor VII. May function as a tumor suppressor negatively regulating cell proliferation and cell migration. In Rattus norvegicus (Rat), this protein is Factor VII-activating protease.